The following is a 294-amino-acid chain: Cytidine deaminase (294 aa).

CMP/dCMP-type deaminase domains are found at residues 48–168 and 186–294; these read DDDA…FGPR and LKGD…VTLA. 89 to 91 provides a ligand contact to substrate; the sequence is NME. Residue His102 participates in Zn(2+) binding. Glu104 functions as the Proton donor in the catalytic mechanism. Residues Cys129 and Cys132 each contribute to the Zn(2+) site.

The protein belongs to the cytidine and deoxycytidylate deaminase family. As to quaternary structure, homodimer. The cofactor is Zn(2+).

The enzyme catalyses cytidine + H2O + H(+) = uridine + NH4(+). It carries out the reaction 2'-deoxycytidine + H2O + H(+) = 2'-deoxyuridine + NH4(+). Its function is as follows. This enzyme scavenges exogenous and endogenous cytidine and 2'-deoxycytidine for UMP synthesis. This is Cytidine deaminase from Cronobacter sakazakii (strain ATCC BAA-894) (Enterobacter sakazakii).